The sequence spans 401 residues: cAMP-dependent protein kinase type II-alpha regulatory subunit (401 aa).

Residue S2 is modified to N-acetylserine. Residues S2 to L135 form a dimerization and phosphorylation region. The interval A43–A65 is disordered. Positions R46 to S58 are enriched in low complexity. A phosphoserine mark is found at S48, S75, and S77. A Phosphoserine; by PKA modification is found at S96. 3',5'-cyclic AMP-binding positions include L136–P257, E205, R214, L258–Q401, E335, and R344. T212 is subject to Phosphothreonine; by PDPK1. S347 and S392 each carry phosphoserine.

This sequence belongs to the cAMP-dependent kinase regulatory chain family. In terms of assembly, the inactive form of the enzyme is composed of two regulatory chains and two catalytic chains. Activation by cAMP produces two active catalytic monomers and a regulatory dimer that binds four cAMP molecules. Interacts with AKAP4 and CBFA2T3. Interacts with the phosphorylated form of PJA2. Interacts with MYRIP; this interaction may link PKA to components of the exocytosis machinery, thus facilitating exocytosis, including insulin release. Forms a complex composed of PRKAR2A, GSK3B and GSKIP through GSKIP interaction; facilitates PKA-induced phosphorylation and regulates GSK3B activity. Interacts with ADCY8; inhibits adenylate cyclase activity through PKA phosphorylation. In terms of processing, a second phosphorylation site has not been located. Phosphorylation of Thr-212 by PDPK1 seems to attenuate the activity of PKA, perhaps by strengthening interaction between the regulatory and the catalytic subunits. Four types of regulatory chains are found: I-alpha, I-beta, II-alpha, and II-beta. Their expression varies among tissues and is in some cases constitutive and in others inducible.

Its subcellular location is the cytoplasm. The protein resides in the cell membrane. Functionally, regulatory subunit of the cAMP-dependent protein kinases involved in cAMP signaling in cells. Type II regulatory chains mediate membrane association by binding to anchoring proteins, including the MAP2 kinase. The chain is cAMP-dependent protein kinase type II-alpha regulatory subunit (PRKAR2A) from Bos taurus (Bovine).